We begin with the raw amino-acid sequence, 110 residues long: Nucleoid-associated protein Mkms_4993 (110 aa).

Belongs to the YbaB/EbfC family. As to quaternary structure, homodimer.

It is found in the cytoplasm. Its subcellular location is the nucleoid. Its function is as follows. Binds to DNA and alters its conformation. May be involved in regulation of gene expression, nucleoid organization and DNA protection. In Mycobacterium sp. (strain KMS), this protein is Nucleoid-associated protein Mkms_4993.